The sequence spans 339 residues: Phenylalanine--tRNA ligase alpha subunit (339 aa).

Residue Glu-250 participates in Mg(2+) binding.

The protein belongs to the class-II aminoacyl-tRNA synthetase family. Phe-tRNA synthetase alpha subunit type 1 subfamily. Tetramer of two alpha and two beta subunits. Mg(2+) is required as a cofactor.

It localises to the cytoplasm. The enzyme catalyses tRNA(Phe) + L-phenylalanine + ATP = L-phenylalanyl-tRNA(Phe) + AMP + diphosphate + H(+). The protein is Phenylalanine--tRNA ligase alpha subunit of Bacteroides thetaiotaomicron (strain ATCC 29148 / DSM 2079 / JCM 5827 / CCUG 10774 / NCTC 10582 / VPI-5482 / E50).